A 176-amino-acid chain; its full sequence is dCTP deaminase (176 aa).

DCTP is bound by residues 99–104 and aspartate 115; that span reads RSTLAR. Glutamate 125 acts as the Proton donor/acceptor in catalysis. Glutamine 163 provides a ligand contact to dCTP.

It belongs to the dCTP deaminase family. Homotrimer.

The catalysed reaction is dCTP + H2O + H(+) = dUTP + NH4(+). It functions in the pathway pyrimidine metabolism; dUMP biosynthesis; dUMP from dCTP (dUTP route): step 1/2. Functionally, catalyzes the deamination of dCTP to dUTP. This chain is dCTP deaminase, found in Pyrobaculum arsenaticum (strain DSM 13514 / JCM 11321 / PZ6).